The sequence spans 114 residues: NADH-ubiquinone oxidoreductase chain 3 (114 aa).

3 helical membrane-spanning segments follow: residues 3–23 (ATILMIAMTLSTILAILSFWL), 54–74 (FFLIAILFLLFDLEIALLLPF), and 85–105 (IVILWAALILTLLTLGLIYEW).

This sequence belongs to the complex I subunit 3 family.

It is found in the mitochondrion membrane. The enzyme catalyses a ubiquinone + NADH + 5 H(+)(in) = a ubiquinol + NAD(+) + 4 H(+)(out). Its function is as follows. Core subunit of the mitochondrial membrane respiratory chain NADH dehydrogenase (Complex I) that is believed to belong to the minimal assembly required for catalysis. Complex I functions in the transfer of electrons from NADH to the respiratory chain. The immediate electron acceptor for the enzyme is believed to be ubiquinone. The chain is NADH-ubiquinone oxidoreductase chain 3 (mt-nd3) from Xenopus laevis (African clawed frog).